The sequence spans 423 residues: GTPase HflX (423 aa).

Positions 201–363 (IQLALVGYTN…KIEQALKGMM (163 aa)) constitute a Hflx-type G domain. GTP-binding positions include 207-214 (GYTNAGKS), 232-236 (FATLD), 254-257 (DTVG), 320-323 (NKAD), and 341-343 (SAY). Residues serine 214 and threonine 234 each coordinate Mg(2+).

Belongs to the TRAFAC class OBG-HflX-like GTPase superfamily. HflX GTPase family. As to quaternary structure, monomer. Associates with the 50S ribosomal subunit. Requires Mg(2+) as cofactor.

The protein localises to the cytoplasm. GTPase that associates with the 50S ribosomal subunit and may have a role during protein synthesis or ribosome biogenesis. This chain is GTPase HflX, found in Alkalihalophilus pseudofirmus (strain ATCC BAA-2126 / JCM 17055 / OF4) (Bacillus pseudofirmus).